The chain runs to 178 residues: MASSMISSPAVTTVNRAGAGMVAPFTGLKSMAGLPTRKTNNDITSIASNGGRVQCMQVWPPVGKKKFETLSYLPDLDDAQLAKEVEYLLRKGWIPCLEFELEHGFVYREHNRSLGYYDGRYWTMWKLPMFGCTDASQVLKELQEAKTAYPNGFIRIIGFDNVRQVQCISFIAYKPPSF.

Residues 1–54 (MASSMISSPAVTTVNRAGAGMVAPFTGLKSMAGLPTRKTNNDITSIASNGGRVQ) constitute a chloroplast transit peptide.

The protein belongs to the RuBisCO small chain family. In terms of assembly, heterohexadecamer of 8 large and 8 small subunits.

Its subcellular location is the plastid. The protein resides in the chloroplast. Functionally, ruBisCO catalyzes two reactions: the carboxylation of D-ribulose 1,5-bisphosphate, the primary event in carbon dioxide fixation, as well as the oxidative fragmentation of the pentose substrate. Both reactions occur simultaneously and in competition at the same active site. Although the small subunit is not catalytic it is essential for maximal activity. This is Ribulose bisphosphate carboxylase small subunit, chloroplastic 2 from Glycine max (Soybean).